Reading from the N-terminus, the 243-residue chain is Probable heat shock transcription factor (243 aa).

Residues 9–102 mediate DNA binding; the sequence is INKFIRRLYK…GDNLLPCIQR (94 aa). Positions 121–164 are involved in trimerization; that stretch reads QLQDLLQYLNNQNFKLEGEIKSLKDRVDQQDCTINGLVQLLTRI.

Belongs to the HSF family. Homotrimer. Homotrimerization increases the affinity of HSF1 to DNA.

The protein localises to the nucleus. Functionally, DNA-binding transcription factor that specifically binds heat shock promoter elements (HSE) and activates transcription. The chain is Probable heat shock transcription factor from Vairimorpha ceranae (strain BRL01) (Microsporidian parasite).